We begin with the raw amino-acid sequence, 295 residues long: Protoheme IX farnesyltransferase (295 aa).

Topologically, residues 1–9 (MSVKHFIQI) are cytoplasmic. Residues 10-28 (TKPGIIFGNVLSVAGGFFL) form a helical membrane-spanning segment. The Periplasmic segment spans residues 29-37 (ASKGHVDFA). The helical transmembrane segment at 38–56 (LFLAVVIGTSLVVASGCVF) threads the bilayer. At 57–78 (NNCIDRDIDHKMERTKNRVMVQ) the chain is on the cytoplasmic side. The chain crosses the membrane as a helical span at residues 79–97 (GGMSLPLALIYATLLGVAG). The Periplasmic portion of the chain corresponds to 98–107 (FSLLYVQANP). The chain crosses the membrane as a helical span at residues 108–126 (LSAFCALIGFIVYVGFYSL). The Cytoplasmic portion of the chain corresponds to 127-197 (WLKRKSVHGT…YSAANIPVLP (71 aa)). Residues 198–216 (VARGILAAKKQIVLYVLAF) traverse the membrane as a helical segment. Residues 217–228 (VLATLMLTLGGY) are Periplasmic-facing. The chain crosses the membrane as a helical span at residues 229-247 (AGLGYLAVAAAMGLYWLYM). Residues 248-268 (AWGGYKAEDDSKWARKVFGFS) are Cytoplasmic-facing. The chain crosses the membrane as a helical span at residues 269–287 (ILTVTALSVMMGVDSQTAA). Residues 288–295 (DVLMTYAR) are Periplasmic-facing.

It belongs to the UbiA prenyltransferase family. Mg(2+) serves as cofactor. Ca(2+) is required as a cofactor.

The protein resides in the cell inner membrane. It carries out the reaction heme b + (2E,6E)-farnesyl diphosphate + H2O = Fe(II)-heme o + diphosphate. In terms of biological role, converts protoheme IX and farnesyl diphosphate to heme O. The polypeptide is Protoheme IX farnesyltransferase (cyoE) (Pseudomonas putida (Arthrobacter siderocapsulatus)).